The chain runs to 333 residues: Fatty acid hydroxylase domain-containing protein 2 (333 aa).

6 helical membrane-spanning segments follow: residues 29-49 (FILG…TWHL), 77-97 (ILFF…FNGL), 134-154 (TVLF…YPFL), 168-188 (FHWF…LFYY), 215-235 (VISL…PVIV), and 237-257 (PLVM…ALII). A Fatty acid hydroxylase domain is found at 176 to 299 (AIFTLIEEVL…LGVLDHLHGT (124 aa)).

Belongs to the sterol desaturase family. As to expression, down-regulated in primary acute myeloid leukemia (AML) patients.

It localises to the cytoplasm. Its subcellular location is the membrane. Functionally, promotes megakaryocyte differentiation by enhancing ERK phosphorylation and up-regulating RUNX1 expression. The chain is Fatty acid hydroxylase domain-containing protein 2 (FAXDC2) from Homo sapiens (Human).